Consider the following 180-residue polypeptide: Large ribosomal subunit protein uL6 (180 aa).

Belongs to the universal ribosomal protein uL6 family. In terms of assembly, part of the 50S ribosomal subunit.

Its function is as follows. This protein binds to the 23S rRNA, and is important in its secondary structure. It is located near the subunit interface in the base of the L7/L12 stalk, and near the tRNA binding site of the peptidyltransferase center. In Clostridium beijerinckii (strain ATCC 51743 / NCIMB 8052) (Clostridium acetobutylicum), this protein is Large ribosomal subunit protein uL6.